Consider the following 305-residue polypeptide: tRNA pseudouridine synthase B (305 aa).

The active-site Nucleophile is Asp-48.

It belongs to the pseudouridine synthase TruB family. Type 1 subfamily.

The enzyme catalyses uridine(55) in tRNA = pseudouridine(55) in tRNA. Functionally, responsible for synthesis of pseudouridine from uracil-55 in the psi GC loop of transfer RNAs. The polypeptide is tRNA pseudouridine synthase B (Pseudomonas fluorescens (strain Pf0-1)).